The chain runs to 430 residues: Resistance to inhibitors of cholinesterase protein 19 (430 aa).

An AH domain is found at 56 to 260; it reads ASDNELDTCL…TSRAFETLAE (205 aa). Positions 279 to 342 are disordered; the sequence is GTKPERERKS…SPLIEDVDDE (64 aa). Positions 281 to 294 are enriched in basic and acidic residues; that stretch reads KPERERKSEKEESA.

As to quaternary structure, interacts with the GTPase activator protein tbc-8; the interaction is direct and may be required for the activation of rab-2 and dense vesicle maturation in cholinergic motoneurons. Interacts with rund-1. Expressed in all neurons. Highly expressed in m2 pharyngeal neurons and some pharyngeal interneurons. Also expressed in the excretory canal and the gland cells located just below the nerve ring in the head.

The protein resides in the cytoplasm. The protein localises to the cytoplasmic vesicle membrane. Its function is as follows. May be involved in neurotransmitter secretion. In association with the GTPase activator protein tbc-8 activates rab-2 during dense core vesicle maturation in cholinergic motoneurons. The protein is Resistance to inhibitors of cholinesterase protein 19 of Caenorhabditis elegans.